The primary structure comprises 215 residues: Large ribosomal subunit protein uL4c (215 aa).

Positions 51-87 are disordered; the sequence is QKQGTVSTKTRSEVRGGGKKPWRQKGTGRARAGSSRS. Over residues 67–78 the composition is skewed to basic residues; it reads GGKKPWRQKGTG.

The protein belongs to the universal ribosomal protein uL4 family. Part of the 50S ribosomal subunit.

The protein localises to the plastid. The protein resides in the chloroplast. Functionally, probably binds the 23S rRNA. The sequence is that of Large ribosomal subunit protein uL4c (rpl4) from Thalassiosira pseudonana (Marine diatom).